We begin with the raw amino-acid sequence, 338 residues long: Mugineic-acid 3-dioxygenase (338 aa).

The 104-residue stretch at 180-283 (DISGGRVVVD…RLSVASFIVP (104 aa)) folds into the Fe2OG dioxygenase domain. Fe cation-binding residues include H208, D210, and H264. R274 contacts 2-oxoglutarate.

This sequence belongs to the iron/ascorbate-dependent oxidoreductase family. The cofactor is Fe(2+). L-ascorbate is required as a cofactor. Expressed in roots, but not in leaves.

The catalysed reaction is mugineate + 2-oxoglutarate + O2 = 3-epihydroxymugineate + succinate + CO2 + H(+). It carries out the reaction 2'-deoxymugineate + 2-oxoglutarate + O2 = 3-epihydroxy-2'-deoxymugineate + succinate + CO2 + H(+). Functionally, involved in the biosynthesis of mugineic acid family of phytosiderophores. Hydroxylates the C-3 positions of mugineic acid (MA) and 2'-deoxymugineic acid (DMA). May be involved in boron tolerance. The protein is Mugineic-acid 3-dioxygenase (IDS2) of Hordeum vulgare (Barley).